The chain runs to 529 residues: tRNA-2-methylthio-N(6)-dimethylallyladenosine synthase 1 (529 aa).

Positions Met-1–Asn-21 are disordered. In terms of domain architecture, MTTase N-terminal spans Arg-25–His-141. [4Fe-4S] cluster is bound by residues Cys-34, Cys-70, Cys-104, Cys-178, Cys-182, and Cys-185. The Radical SAM core domain occupies Arg-164–Glu-407. One can recognise a TRAM domain in the interval Arg-410–Leu-480. Positions Leu-481–Gly-504 are disordered.

The protein belongs to the methylthiotransferase family. MiaB subfamily. As to quaternary structure, monomer. It depends on [4Fe-4S] cluster as a cofactor.

It localises to the cytoplasm. The enzyme catalyses N(6)-dimethylallyladenosine(37) in tRNA + (sulfur carrier)-SH + AH2 + 2 S-adenosyl-L-methionine = 2-methylsulfanyl-N(6)-dimethylallyladenosine(37) in tRNA + (sulfur carrier)-H + 5'-deoxyadenosine + L-methionine + A + S-adenosyl-L-homocysteine + 2 H(+). In terms of biological role, catalyzes the methylthiolation of N6-(dimethylallyl)adenosine (i(6)A), leading to the formation of 2-methylthio-N6-(dimethylallyl)adenosine (ms(2)i(6)A) at position 37 in tRNAs that read codons beginning with uridine. The chain is tRNA-2-methylthio-N(6)-dimethylallyladenosine synthase 1 from Mycobacterium marinum (strain ATCC BAA-535 / M).